A 479-amino-acid chain; its full sequence is MPVSDFQPVIGLEVHAQLLTQSKIFCGCSTAFGAEPNRNTCPVCLGMPGVLPVLNQRVAEFAVRTGLALECTIRPTSVWSRKNYFYPDLPKGYQITQFDQPICEHGRLVIDTPQGEKAIRILRIHMEEDAGKSVHDAGGGQSLVDLNRAGVPLLEIVSQPDLRDADEAVEYLKAMRDVLVYLGVNDGNLEEGSFRCDANVSVMPKGSTTFGQRCELKNLNSFRFLKQAIEYEIARQVDVIESGGKVVQETRLWDVNKGVTRSMRSKEEAHDYRYFPEPDLPPLHVSAEAIAAAAKALPELPRAKLQRFTSQYGLPAYDARILTAERPLADYFEACAGHYKDYKKLSNWFLGELMRLLKEEGTPLSALRFTPAQLGELLGAVDQGMVSANAGKDVLGEMFRTGKAPADIIAEKGLAQVSDTGAIEAVVDDILAKNAGEIEKYRAGKKQVFGFFVGQVMRAMKGKGNPALVNELLKKKLGD.

This sequence belongs to the GatB/GatE family. GatB subfamily. As to quaternary structure, heterotrimer of A, B and C subunits.

The enzyme catalyses L-glutamyl-tRNA(Gln) + L-glutamine + ATP + H2O = L-glutaminyl-tRNA(Gln) + L-glutamate + ADP + phosphate + H(+). It catalyses the reaction L-aspartyl-tRNA(Asn) + L-glutamine + ATP + H2O = L-asparaginyl-tRNA(Asn) + L-glutamate + ADP + phosphate + 2 H(+). Allows the formation of correctly charged Asn-tRNA(Asn) or Gln-tRNA(Gln) through the transamidation of misacylated Asp-tRNA(Asn) or Glu-tRNA(Gln) in organisms which lack either or both of asparaginyl-tRNA or glutaminyl-tRNA synthetases. The reaction takes place in the presence of glutamine and ATP through an activated phospho-Asp-tRNA(Asn) or phospho-Glu-tRNA(Gln). This is Aspartyl/glutamyl-tRNA(Asn/Gln) amidotransferase subunit B from Myxococcus xanthus (strain DK1622).